We begin with the raw amino-acid sequence, 109 residues long: Large ribosomal subunit protein uL23 (109 aa).

Belongs to the universal ribosomal protein uL23 family. Part of the 50S ribosomal subunit. Contacts protein L29, and trigger factor when it is bound to the ribosome.

Its function is as follows. One of the early assembly proteins it binds 23S rRNA. One of the proteins that surrounds the polypeptide exit tunnel on the outside of the ribosome. Forms the main docking site for trigger factor binding to the ribosome. The protein is Large ribosomal subunit protein uL23 of Haemophilus influenzae (strain PittEE).